We begin with the raw amino-acid sequence, 145 residues long: Deoxyuridine 5'-triphosphate nucleotidohydrolase (145 aa).

Substrate contacts are provided by residues 64 to 66 (RSG), asparagine 77, 81 to 83 (TID), and methionine 91.

It belongs to the dUTPase family. Mg(2+) is required as a cofactor.

The catalysed reaction is dUTP + H2O = dUMP + diphosphate + H(+). Its pathway is pyrimidine metabolism; dUMP biosynthesis; dUMP from dCTP (dUTP route): step 2/2. Functionally, this enzyme is involved in nucleotide metabolism: it produces dUMP, the immediate precursor of thymidine nucleotides and it decreases the intracellular concentration of dUTP so that uracil cannot be incorporated into DNA. This Leptospira interrogans serogroup Icterohaemorrhagiae serovar copenhageni (strain Fiocruz L1-130) protein is Deoxyuridine 5'-triphosphate nucleotidohydrolase.